The sequence spans 731 residues: 1,4-alpha-glucan branching enzyme GlgB (731 aa).

The Nucleophile role is filled by Asp409. Residue Glu462 is the Proton donor of the active site.

It belongs to the glycosyl hydrolase 13 family. GlgB subfamily. In terms of assembly, monomer.

It carries out the reaction Transfers a segment of a (1-&gt;4)-alpha-D-glucan chain to a primary hydroxy group in a similar glucan chain.. The protein operates within glycan biosynthesis; glycogen biosynthesis. Functionally, catalyzes the formation of the alpha-1,6-glucosidic linkages in glycogen by scission of a 1,4-alpha-linked oligosaccharide from growing alpha-1,4-glucan chains and the subsequent attachment of the oligosaccharide to the alpha-1,6 position. In Roseobacter denitrificans (strain ATCC 33942 / OCh 114) (Erythrobacter sp. (strain OCh 114)), this protein is 1,4-alpha-glucan branching enzyme GlgB.